The primary structure comprises 402 residues: Advanced glycosylation end product-specific receptor (402 aa).

Positions 1 to 22 (MPTGTVARAWVLVLALWGAVAG) are cleaved as a signal peptide. One can recognise an Ig-like V-type domain in the interval 23–109 (GQNITARIGE…ATNRLGKEVK (87 aa)). The Extracellular portion of the chain corresponds to 23–341 (GQNITARIGE…DGSGLGTLAL (319 aa)). 2 N-linked (GlcNAc...) asparagine glycosylation sites follow: N25 and N80. Disulfide bonds link C38–C98 and C143–C206. Ig-like C2-type domains lie at 123–219 (PEIV…RPLN) and 233–315 (PEGI…PPVN). The chain crosses the membrane as a helical span at residues 342–362 (ALGILGGLGIAALLIGAILWR). The Cytoplasmic segment spans residues 363-402 (KRQPRLEERKAPESQEDEEERAELNQSEEAEMPENGAGGP). The tract at residues 368–402 (LEERKAPESQEDEEERAELNQSEEAEMPENGAGGP) is disordered. S376 and S389 each carry phosphoserine. A compositionally biased stretch (acidic residues) spans 376–394 (SQEDEEERAELNQSEEAEM).

Constitutive homodimer; disulfide-linked. Forms homooligomers. Interacts with S100A1 and APP. Interacts with S100B, S100A12 and S100A14. Interacts with TIRAP. Interacts with HMGB1. Interacts with LGP2; this interaction plays an important role in AGER-mediated pro-inflammatory responses and cytokine release. Interacts with double-strand break repair protein MRE11 which is a core component of the MRN complex; the interaction enhances MRE11 endonuclease activity and promotes DNA repair. Interacts with the MCM2-7 complex via interaction with complex member MCM2; the interaction is increased following DNA replication stress and stabilizes the MCM2-7 complex at replication forks. Post-translationally, phosphorylated on its cytoplasmic domain by PKCzeta/PRKCZ upon ligand binding. Phosphorylated by ATM following DNA damage. Targeted by the ubiquitin E3 ligase subunit FBXO10 to mediate its ubiquitination and degradation. As to expression, endothelial cells and cardiomyocytes. Expressed in brain.

The protein resides in the cell membrane. It is found in the cell projection. Its subcellular location is the phagocytic cup. The protein localises to the early endosome. It localises to the nucleus. In terms of biological role, cell surface pattern recognition receptor that senses endogenous stress signals with a broad ligand repertoire including advanced glycation end products, S100 proteins, high-mobility group box 1 protein/HMGB1, amyloid beta/APP oligomers, nucleic acids, histones, phospholipids and glycosaminoglycans. Advanced glycosylation end products are nonenzymatically glycosylated proteins which accumulate in vascular tissue in aging and at an accelerated rate in diabetes. These ligands accumulate at inflammatory sites during the pathogenesis of various diseases including diabetes, vascular complications, neurodegenerative disorders and cancers, and RAGE transduces their binding into pro-inflammatory responses. Upon ligand binding, uses TIRAP and MYD88 as adapters to transduce the signal ultimately leading to the induction of inflammatory cytokines IL6, IL8 and TNFalpha through activation of NF-kappa-B. Interaction with S100A12 on endothelium, mononuclear phagocytes, and lymphocytes triggers cellular activation, with generation of key pro-inflammatory mediators. Interaction with S100B after myocardial infarction may play a role in myocyte apoptosis by activating ERK1/2 and p53/TP53 signaling. Contributes to the translocation of amyloid-beta peptide (ABPP) across the cell membrane from the extracellular to the intracellular space in cortical neurons. ABPP-initiated RAGE signaling, especially stimulation of p38 mitogen-activated protein kinase (MAPK), has the capacity to drive a transport system delivering ABPP as a complex with RAGE to the intraneuronal space. Participates in endothelial albumin transcytosis together with HMGB1 through the RAGE/SRC/Caveolin-1 pathway, leading to endothelial hyperpermeability. Mediates the loading of HMGB1 in extracellular vesicles (EVs) that shuttle HMGB1 to hepatocytes by transferrin-mediated endocytosis and subsequently promote hepatocyte pyroptosis by activating the NLRP3 inflammasome. Binds to DNA and promotes extracellular hypomethylated DNA (CpG DNA) uptake by cells via the endosomal route to activate inflammatory responses. Mediates phagocytosis by non-professional phagocytes (NPP) and this is enhanced by binding to ligands including RNA, DNA, HMGB1 and histones. Promotes NPP-mediated phagocytosis of Saccharomyces cerevisiae spores by binding to RNA attached to the spore wall. Also promotes NPP-mediated phagocytosis of apoptotic cells. Following DNA damage, recruited to DNA double-strand break sites where it colocalizes with the MRN repair complex via interaction with double-strand break repair protein MRE11. Enhances the endonuclease activity of MRE11, promoting the end resection of damaged DNA. Promotes DNA damage repair in trophoblasts which enhances trophoblast invasion and contributes to placental development and maintenance. Protects cells from DNA replication stress by localizing to damaged replication forks where it stabilizes the MCM2-7 complex and promotes faithful progression of the replication fork. The chain is Advanced glycosylation end product-specific receptor (Ager) from Rattus norvegicus (Rat).